Reading from the N-terminus, the 292-residue chain is 33 kDa chaperonin (292 aa).

Cystine bridges form between C230-C232 and C263-C266.

The protein belongs to the HSP33 family. Post-translationally, under oxidizing conditions two disulfide bonds are formed involving the reactive cysteines. Under reducing conditions zinc is bound to the reactive cysteines and the protein is inactive.

It localises to the cytoplasm. In terms of biological role, redox regulated molecular chaperone. Protects both thermally unfolding and oxidatively damaged proteins from irreversible aggregation. Plays an important role in the bacterial defense system toward oxidative stress. The polypeptide is 33 kDa chaperonin (Serratia proteamaculans (strain 568)).